Consider the following 213-residue polypeptide: Thymidylate kinase (213 aa).

Residue 10–17 (GLEGAGKT) coordinates ATP.

The protein belongs to the thymidylate kinase family.

The catalysed reaction is dTMP + ATP = dTDP + ADP. Phosphorylation of dTMP to form dTDP in both de novo and salvage pathways of dTTP synthesis. The protein is Thymidylate kinase of Escherichia coli O81 (strain ED1a).